Consider the following 621-residue polypeptide: Methionine--tRNA ligase (621 aa).

Residues 11–21 (PYANGPRHIGH) carry the 'HIGH' region motif. The Zn(2+) site is built by cysteine 143, cysteine 146, cysteine 156, and cysteine 159. A 'KMSKS' region motif is present at residues 347 to 351 (KFSSS). Residue serine 350 coordinates ATP.

The protein belongs to the class-I aminoacyl-tRNA synthetase family. MetG type 1 subfamily. Monomer. The cofactor is Zn(2+).

It localises to the cytoplasm. The enzyme catalyses tRNA(Met) + L-methionine + ATP = L-methionyl-tRNA(Met) + AMP + diphosphate. Functionally, is required not only for elongation of protein synthesis but also for the initiation of all mRNA translation through initiator tRNA(fMet) aminoacylation. This is Methionine--tRNA ligase from Bifidobacterium longum subsp. infantis (strain ATCC 15697 / DSM 20088 / JCM 1222 / NCTC 11817 / S12).